Consider the following 295-residue polypeptide: ATP synthase gamma chain (295 aa).

The protein belongs to the ATPase gamma chain family. F-type ATPases have 2 components, CF(1) - the catalytic core - and CF(0) - the membrane proton channel. CF(1) has five subunits: alpha(3), beta(3), gamma(1), delta(1), epsilon(1). CF(0) has three main subunits: a, b and c.

Its subcellular location is the cell inner membrane. In terms of biological role, produces ATP from ADP in the presence of a proton gradient across the membrane. The gamma chain is believed to be important in regulating ATPase activity and the flow of protons through the CF(0) complex. This is ATP synthase gamma chain from Chlorobium phaeobacteroides (strain BS1).